Consider the following 484-residue polypeptide: Major extracellular endoglucanase (484 aa).

Positions 1 to 25 (MSIFRTASTLALATALALAAGPAFS) are cleaved as a signal peptide. E182 serves as the catalytic Proton donor. E303 serves as the catalytic Nucleophile. Positions 370-402 (GTAGNTTPTPTPTPTPTPTPTPTPTPTPTPGTS) are disordered. A thr-Pro repeats ('hinge') (Pro-Thr box) region spans residues 375–399 (TTPTPTPTPTPTPTPTPTPTPTPTP). The segment covering 378–398 (TPTPTPTPTPTPTPTPTPTPT) has biased composition (pro residues). Positions 395-484 (PTPTPGTSTF…TAEFGFCAAS (90 aa)) constitute a CBM2 domain.

It belongs to the glycosyl hydrolase 5 (cellulase A) family.

It carries out the reaction Endohydrolysis of (1-&gt;4)-beta-D-glucosidic linkages in cellulose, lichenin and cereal beta-D-glucans.. This Xanthomonas campestris pv. campestris (strain ATCC 33913 / DSM 3586 / NCPPB 528 / LMG 568 / P 25) protein is Major extracellular endoglucanase (engXCA).